The chain runs to 775 residues: MASAGHIITLLLWGYLLELWTGGHTADTTHPRLRLSHKELLNLNRTSIFHSPFGFLDLHTMLLDEYQERLFVGGRDLVYSLSLERISDGYKEIHWPSTALKMEECIMKGKDAGECANYVRVLHHYNRTHLLTCGTGAFDPVCAFIRVGYHLEDPLFHLESPRSERGRGRCPFDPSSSFISTLIGSELFAGLYSDYWSRDAAIFRSMGRLAHIRTEHDDERLLKEPKFVGSYMIPDNEDRDDNKVYFFFTEKALEAENNAHAIYTRVGRLCVNDVGGQRILVNKWSTFLKARLVCSVPGMNGIDTYFDELEDVFLLPTRDHKNPVIFGLFNTTSNIFRGHAICVYHMSSIRAAFNGPYAHKEGPEYHWSVYEGKVPYPRPGSCASKVNGGRYGTTKDYPDDAIRFARSHPLMYQAIKPAHKKPILVKTDGKYNLKQIAVDRVEAEDGQYDVLFIGTDNGIVLKVITIYNQEMESMEEVILEELQIFKDPVPIISMEISSKRQQLYIGSASAVAQVRFHHCDMYGSACADCCLARDPYCAWDGISCSRYYPTGTHAKRRFRRQDVRHGNAAQQCFGQQFVGDALDKTEEHLAYGIENNSTLLECTPRSLQAKVIWFVQKGRETRKEEVKTDDRVVKMDLGLLFLRLHKSDAGTYFCQTVEHSFVHTVRKITLEVVEEEKVEDMFNKDDEEDRHHRMPCPAQSSISQGAKPWYKEFLQLIGYSNFQRVEEYCEKVWCTDRKRKKLKMSPSKWKYANPQEKKLRSKPEHYRLPRHTLDS.

Residues 1–25 form the signal peptide; that stretch reads MASAGHIITLLLWGYLLELWTGGHT. A Sema domain is found at 32–516; the sequence is RLRLSHKELL…SASAVAQVRF (485 aa). Asn-44 carries an N-linked (GlcNAc...) asparagine glycan. Cys-105 and Cys-115 are oxidised to a cystine. Residue Asn-126 is glycosylated (N-linked (GlcNAc...) asparagine). 4 disulfides stabilise this stretch: Cys-133–Cys-142, Cys-270–Cys-382, Cys-294–Cys-342, and Cys-519–Cys-537. Residue Asn-330 is glycosylated (N-linked (GlcNAc...) asparagine). The region spanning 581–669 is the Ig-like C2-type domain; the sequence is ALDKTEEHLA…SFVHTVRKIT (89 aa). 2 N-linked (GlcNAc...) asparagine glycosylation sites follow: Asn-595 and Asn-596. The cysteines at positions 654 and 729 are disulfide-linked. Residues 742-775 are disordered; sequence LKMSPSKWKYANPQEKKLRSKPEHYRLPRHTLDS. The segment covering 755-775 has biased composition (basic and acidic residues); sequence QEKKLRSKPEHYRLPRHTLDS.

This sequence belongs to the semaphorin family. In terms of assembly, interacts with PLXND1.

The protein resides in the secreted. Plays an important role in signaling via the cell surface receptor PLXND1. Mediates reorganization of the actin cytoskeleton, leading to the retraction of cell projections. Promotes focal adhesion disassembly and inhibits adhesion of endothelial cells to the extracellular matrix. Regulates angiogenesis, both during embryogenesis and after birth. Can down-regulate sprouting angiogenesis. Required for normal vascular patterning during embryogenesis. Plays an important role in ensuring the specificity of synapse formation. This chain is Semaphorin-3E (SEMA3E), found in Homo sapiens (Human).